Reading from the N-terminus, the 380-residue chain is Putative RNA ligase (380 aa).

In terms of biological role, putative RNA ligase. Is able to catalyze the adenylation reaction of ssDNA 3'-terminal phosphate (ssDNA 3'p) to 3'-adenylated DNA (ssDNA 3'pp5'A). In Thermovibrio ammonificans (strain DSM 15698 / JCM 12110 / HB-1), this protein is Putative RNA ligase.